The primary structure comprises 161 residues: Ribonuclease H (161 aa).

The region spanning 2-141 is the RNase H type-1 domain; that stretch reads TNNEIIAATD…ADSLARQAAN (140 aa). Residues D11, E46, D69, and D133 each contribute to the Mg(2+) site.

It belongs to the RNase H family. Monomer. It depends on Mg(2+) as a cofactor.

It localises to the cytoplasm. It carries out the reaction Endonucleolytic cleavage to 5'-phosphomonoester.. Its function is as follows. Endonuclease that specifically degrades the RNA of RNA-DNA hybrids. This Tropheryma whipplei (strain TW08/27) (Whipple's bacillus) protein is Ribonuclease H.